Consider the following 495-residue polypeptide: MKKLTALWDIDEQLDSVHRDIELQEMILDSRLANTGCLFVAIKGHRVDGREFIMQAIQNGASAVLFETDLVEQHLTVSFEQNIPLIAYYELSKHLSHIADRFYSSPSQRLTLVGVTGTNGKTTIAQLLAQWTQILGHTSAVMGTIGNGLFGQIKEASNTTGSAIEIQSSLDKFIRQGADFAAIEVSSHGLVQHRVEALTFRAGIFTNLSRDHLDYHHTMENYAQAKKRLFSELNCQHKILNVDDEIGATWLIELSKDDPDVVAVSCRADYQPDTKNWLKATALSFHSKGTTIEFASSWGNGILSSPLIGGFNVSNLLLVLATLLSLGYDIGKLLATVRQLTGVCGRMEMLSAKHKATVIVDYAHTPDALENALQSAAVHCQGKLWCIFGCGGDRDRGKRPLMAAIAEKFADSVIVTDDNPRTENPEQIMQDILTGFQQSSAVQIIHQREQAIKTALQSAVENDVVLIAGKGHENYQIIGTTKYHFSDQEIVKKYF.

UDP-N-acetyl-alpha-D-muramoyl-L-alanyl-D-glutamate contacts are provided by residues Leu28, Ser30, and 45–47; that span reads HRV. 117 to 123 lines the ATP pocket; sequence GTNGKTT. UDP-N-acetyl-alpha-D-muramoyl-L-alanyl-D-glutamate contacts are provided by residues Asn158, 159–160, Ser186, Gln192, and Arg194; that span reads TT. An N6-carboxylysine modification is found at Lys226. Residues Arg394, 418 to 421, Gly469, and Glu473 contribute to the meso-2,6-diaminopimelate site; that span reads DNPR. The Meso-diaminopimelate recognition motif signature appears at 418-421; the sequence is DNPR.

It belongs to the MurCDEF family. MurE subfamily. Mg(2+) is required as a cofactor. Post-translationally, carboxylation is probably crucial for Mg(2+) binding and, consequently, for the gamma-phosphate positioning of ATP.

Its subcellular location is the cytoplasm. It carries out the reaction UDP-N-acetyl-alpha-D-muramoyl-L-alanyl-D-glutamate + meso-2,6-diaminopimelate + ATP = UDP-N-acetyl-alpha-D-muramoyl-L-alanyl-gamma-D-glutamyl-meso-2,6-diaminopimelate + ADP + phosphate + H(+). Its pathway is cell wall biogenesis; peptidoglycan biosynthesis. Functionally, catalyzes the addition of meso-diaminopimelic acid to the nucleotide precursor UDP-N-acetylmuramoyl-L-alanyl-D-glutamate (UMAG) in the biosynthesis of bacterial cell-wall peptidoglycan. In Histophilus somni (strain 129Pt) (Haemophilus somnus), this protein is UDP-N-acetylmuramoyl-L-alanyl-D-glutamate--2,6-diaminopimelate ligase.